We begin with the raw amino-acid sequence, 763 residues long: 5-methyltetrahydropteroyltriglutamate--homocysteine methyltransferase (763 aa).

5-methyltetrahydropteroyltri-L-glutamate is bound by residues 16-19 and Lys-117; that span reads RELK. Residues 438-440 and Glu-491 each bind L-homocysteine; that span reads IGS. Residues 438 to 440 and Glu-491 each bind L-methionine; that span reads IGS. 5-methyltetrahydropteroyltri-L-glutamate contacts are provided by residues 522–523 and Trp-568; that span reads RC. Asp-606 provides a ligand contact to L-homocysteine. Asp-606 serves as a coordination point for L-methionine. Residue Glu-612 coordinates 5-methyltetrahydropteroyltri-L-glutamate. Residues His-648, Cys-650, and Glu-672 each coordinate Zn(2+). Residue His-701 is the Proton donor of the active site. Cys-733 provides a ligand contact to Zn(2+).

This sequence belongs to the vitamin-B12 independent methionine synthase family. The cofactor is Zn(2+).

It catalyses the reaction 5-methyltetrahydropteroyltri-L-glutamate + L-homocysteine = tetrahydropteroyltri-L-glutamate + L-methionine. It functions in the pathway amino-acid biosynthesis; L-methionine biosynthesis via de novo pathway; L-methionine from L-homocysteine (MetE route): step 1/1. Functionally, catalyzes the transfer of a methyl group from 5-methyltetrahydrofolate to homocysteine resulting in methionine formation. The protein is 5-methyltetrahydropteroyltriglutamate--homocysteine methyltransferase of Pseudomonas paraeruginosa (strain DSM 24068 / PA7) (Pseudomonas aeruginosa (strain PA7)).